We begin with the raw amino-acid sequence, 1119 residues long: Putative transcription factor SEF1 (1119 aa).

2 disordered regions span residues Met-1 to Arg-70 and Gln-86 to Lys-105. Residues Leu-47–Arg-70 show a composition bias toward polar residues. Positions Cys-118–Cys-148 form a DNA-binding region, zn(2)-C6 fungal-type. Disordered regions lie at residues Gln-236 to Thr-290, Ser-306 to Gln-335, Ala-894 to Asn-913, Lys-926 to Thr-962, and Ser-994 to Asn-1018. Positions Thr-243–Thr-260 are enriched in low complexity. The span at Gly-261–Ala-288 shows a compositional bias: polar residues. A compositionally biased stretch (low complexity) spans Ser-306–Thr-322. 3 stretches are compositionally biased toward polar residues: residues Gly-323 to Gln-335, Arg-902 to Asn-913, and Ser-931 to Asn-942. The span at Ser-943–Ser-954 shows a compositional bias: low complexity.

The protein resides in the nucleus. In terms of biological role, putative transcription factor. Suppresses the lethal phenotype of RPM2 deletion. This is Putative transcription factor SEF1 (SEF1) from Kluyveromyces lactis (strain ATCC 8585 / CBS 2359 / DSM 70799 / NBRC 1267 / NRRL Y-1140 / WM37) (Yeast).